Reading from the N-terminus, the 424-residue chain is Tyrosine--tRNA ligase (424 aa).

L-tyrosine is bound at residue Tyr37. Positions 42-51 (PTADSLHLGH) match the 'HIGH' region motif. Position 144 is an N6-acetyllysine (Lys144). 2 residues coordinate L-tyrosine: Tyr175 and Gln179. Positions 235–239 (KFGKT) match the 'KMSKS' region motif. Lys238 provides a ligand contact to ATP. Positions 357 to 414 (ADLMQALVDSELQPSRGQARKTIASNAITINGEKQSDPEYFFKEEDRLFGRFTLLRRG) constitute an S4 RNA-binding domain.

The protein belongs to the class-I aminoacyl-tRNA synthetase family. TyrS type 1 subfamily. As to quaternary structure, homodimer.

Its subcellular location is the cytoplasm. The enzyme catalyses tRNA(Tyr) + L-tyrosine + ATP = L-tyrosyl-tRNA(Tyr) + AMP + diphosphate + H(+). Its function is as follows. Catalyzes the attachment of tyrosine to tRNA(Tyr) in a two-step reaction: tyrosine is first activated by ATP to form Tyr-AMP and then transferred to the acceptor end of tRNA(Tyr). The sequence is that of Tyrosine--tRNA ligase from Shigella dysenteriae serotype 1 (strain Sd197).